The primary structure comprises 53 residues: Small, acid-soluble spore protein K (53 aa).

The segment at 1 to 53 is disordered; that stretch reads MRNKERNFPNQNNNKFEGEPRAKAEYASKRANGTTNTHPQERMHASGKRDDNF. Composition is skewed to basic and acidic residues over residues 16-28 and 39-53; these read FEGE…EYAS and PQER…DDNF.

It belongs to the SspK family.

The protein localises to the spore core. In Geobacillus sp. (strain WCH70), this protein is Small, acid-soluble spore protein K.